The primary structure comprises 306 residues: Protein FdhE homolog (306 aa).

The protein belongs to the FdhE family.

The protein resides in the cytoplasm. Its function is as follows. Necessary for formate dehydrogenase activity. This chain is Protein FdhE homolog, found in Glaesserella parasuis serovar 5 (strain SH0165) (Haemophilus parasuis).